Reading from the N-terminus, the 316-residue chain is Probable cobalamin biosynthesis protein CobD (316 aa).

A run of 5 helical transmembrane segments spans residues 1–21, 50–70, 89–109, 165–185, and 294–314; these read MITEIFPFSVLILALLIDIVL, ISGMIISVLVISGAVLAGFAL, ILALIISSYLLKSTFAFKSLI, PLFYYVLFSCAGLGVEAALAF, and ISLIGRAMVLAALLSALLLIL.

Belongs to the CobD/CbiB family.

The protein localises to the cell membrane. It participates in cofactor biosynthesis; adenosylcobalamin biosynthesis. Its function is as follows. Converts cobyric acid to cobinamide by the addition of aminopropanol on the F carboxylic group. The sequence is that of Probable cobalamin biosynthesis protein CobD from Methanothrix thermoacetophila (strain DSM 6194 / JCM 14653 / NBRC 101360 / PT) (Methanosaeta thermophila).